A 414-amino-acid chain; its full sequence is MNIVKRAVPELLRGMTNATPNIGLIKNKVVSFEAVGQLKKSFYKRQLPKQCLAFDSSLGKDVFLRALQEGRMENYFSLAQQMVTQNEPAFCGLGTLCMILNSLKVDPGRLWKGSWRWYDQYMLDCCRSLSDIEKDGVTLEEFSCLANCNGLRTITKCVKDVSFDEFRKDVISCSTIENKIMAISFCRKVLGQTGDGHFSPVGGFSESDNKILILDVARFKYPCYWVDLKLMYESMFPIDKASGQPRGYVLLEPMHIPLGVLTVGLNKYSWRNVSKHILQQAATVKNADNLAEILLSINQSSIPLIQERSNSSKSGDFEHFKECIRSTKTYHLFLKHTNTNVEYITMAFWAIFSLPMIQKALPKGVLEEIQSLLKEVEISEINTQLTALKKQLDSLTHCCKTDTGCCSSSCCKNT.

The 220-residue stretch at glutamine 37–isoleucine 256 folds into the Peptidase C83 domain.

It belongs to the phytochelatin synthase family.

The catalysed reaction is [Glu(-Cys)](n)-Gly + glutathione + H(+) = [Glu(-Cys)](n+1)-Gly + glycine. Its function is as follows. Required for detoxification of heavy metals such as cadmium and arsenate. The polypeptide is Glutathione gamma-glutamylcysteinyltransferase (Schizosaccharomyces pombe (strain 972 / ATCC 24843) (Fission yeast)).